We begin with the raw amino-acid sequence, 453 residues long: tRNA modification GTPase MnmE (453 aa).

Residues arginine 22, glutamate 79, and lysine 119 each contribute to the (6S)-5-formyl-5,6,7,8-tetrahydrofolate site. The 162-residue stretch at 215–376 (GMKVVIAGRP…LRNHLKECMG (162 aa)) folds into the TrmE-type G domain. Asparagine 225 serves as a coordination point for K(+). Residues 225–230 (NAGKSS), 244–250 (TDIAGTT), 269–272 (DTAG), and 334–337 (NKAD) each bind GTP. Serine 229 contacts Mg(2+). K(+)-binding residues include threonine 244, isoleucine 246, and threonine 249. Threonine 250 serves as a coordination point for Mg(2+). (6S)-5-formyl-5,6,7,8-tetrahydrofolate is bound at residue lysine 453.

Belongs to the TRAFAC class TrmE-Era-EngA-EngB-Septin-like GTPase superfamily. TrmE GTPase family. As to quaternary structure, homodimer. Heterotetramer of two MnmE and two MnmG subunits. K(+) is required as a cofactor.

It is found in the cytoplasm. Functionally, exhibits a very high intrinsic GTPase hydrolysis rate. Involved in the addition of a carboxymethylaminomethyl (cmnm) group at the wobble position (U34) of certain tRNAs, forming tRNA-cmnm(5)s(2)U34. The protein is tRNA modification GTPase MnmE of Vibrio vulnificus (strain YJ016).